Here is a 144-residue protein sequence, read N- to C-terminus: Putative lipoprotein MAH_0816 (144 aa).

The first 24 residues, 1–24 (MRWPMQNRTTAVIAVALATTALVA), serve as a signal peptide directing secretion. The N-palmitoyl cysteine moiety is linked to residue Cys-25. Residue Cys-25 is the site of S-diacylglycerol cysteine attachment.

This sequence belongs to the mycobacterial 19 kDa antigen family.

It is found in the cell membrane. The protein is Putative lipoprotein MAH_0816 of Mycobacterium avium subsp. hominissuis (strain TH135).